Reading from the N-terminus, the 194-residue chain is Cation channel sperm-associated auxiliary subunit zeta (194 aa).

As to quaternary structure, component of the CatSper complex or CatSpermasome composed of the core pore-forming members CATSPER1, CATSPER2, CATSPER3 and CATSPER4 as well as auxiliary members CATSPERB, CATSPERG2, CATSPERD, CATSPERE, CATSPERZ, C2CD6/CATSPERT, SLCO6C1, TMEM249, TMEM262 and EFCAB9. HSPA1 may be an additional auxiliary complex member. The core complex members CATSPER1, CATSPER2, CATSPER3 and CATSPER4 form a heterotetrameric channel. The auxiliary CATSPERB, CATSPERG2, CATSPERD and CATSPERE subunits form a pavilion-like structure over the pore which stabilizes the complex through interactions with CATSPER4, CATSPER3, CATSPER1 and CATSPER2 respectively. SLCO6C1 interacts with CATSPERE and TMEM262/CATSPERH interacts with CATSPERB, further stabilizing the complex. C2CD6/CATSPERT interacts at least with CATSPERD and is required for targeting the CatSper complex in the flagellar membrane. Interacts with EFCAB9; the interaction is direct, Ca(2+)-dependent and connects EFCAB9 with the CatSper complex. Dissociates from EFCAB9 at elevated pH. In terms of tissue distribution, testis-specific. Expressed in adult but not in fetal testis. Not expressed in ovary. Within testis, expression is restricted to spermatids.

It localises to the cell projection. It is found in the cilium. Its subcellular location is the flagellum membrane. Functionally, auxiliary component of the CatSper complex, a complex involved in sperm cell hyperactivation. Sperm cell hyperactivation is needed for sperm motility which is essential late in the preparation of sperm for fertilization. Required for a distribution of the CatSper complex in linear quadrilateral nanodomains along the flagellum, maximizing fertilization inside the mammalian female reproductive tract. Together with EFCAB9, associates with the CatSper channel pore and is required for the two-row structure of each single CatSper channel. In Mus musculus (Mouse), this protein is Cation channel sperm-associated auxiliary subunit zeta.